A 586-amino-acid polypeptide reads, in one-letter code: Zinc finger protein Eos (586 aa).

Disordered regions lie at residues 1-42 and 68-98; these read MHTP…APDF and EKEFLGAPVGPSVSTPNSQHSSPSRSLSANS. The span at 25–34 shows a compositional bias: basic and acidic residues; that stretch reads QGKDNLEREL. A compositionally biased stretch (polar residues) spans 79–98; it reads SVSTPNSQHSSPSRSLSANS. Lys-100 is covalently cross-linked (Glycyl lysine isopeptide (Lys-Gly) (interchain with G-Cter in SUMO2)). Ser-105 carries the phosphoserine modification. 4 consecutive C2H2-type zinc fingers follow at residues 159-181, 187-209, 215-237, and 248-271; these read LKCDVCGMVCIGPNVLMVHKRSH, FHCNQCGASFTQKGNLLRHIKLH, FKCPFCNYACRRRDALTGHLRTH, and YKCNYCGRSYKQQSTLEEHKERCH. Positions 281–586 are interaction with FOXP3; the sequence is AQALTGQPGD…HIVRGEHKVG (306 aa). N6-acetyllysine is present on Lys-335. The disordered stretch occupies residues 413–490; sequence RLELPGSREA…QPPPTIVVGR (78 aa). Residues 423-433 carry the CTBP-binding motif PEDLG motif; sequence GEGPEDLGDGG. Positions 476–485 are enriched in pro residues; that stretch reads QGPPPQPPPT. Lys-501 participates in a covalent cross-link: Glycyl lysine isopeptide (Lys-Gly) (interchain with G-Cter in SUMO2). 2 C2H2-type zinc fingers span residues 531–553 and 559–583; these read FKCEHCRILFLDHVMFTIHMGCH and FECNICGYHSQDRYEFSSHIVRGEH.

The protein belongs to the Ikaros C2H2-type zinc-finger protein family. As to quaternary structure, self-associates. Interacts with other family members; IKZF1, IKZF2, IKZF3 and IKZF5. Interacts with CTBP2, SPI1 and MITF. Interacts with FOXP3 and CTBP1. In terms of tissue distribution, expressed mainly in the brain. Up-regulated in long term cultured astrocytes. Down-regulated during osteoclast differentiation.

It localises to the nucleus. In terms of biological role, DNA-binding protein that binds to the 5'GGGAATRCC-3' Ikaros-binding sequence. Interacts with SPI1 and MITF to repress transcription of the CTSK and ACP5 promoters via recruitment of corepressors SIN3A and CTBP2. May be involved in the development of central and peripheral nervous systems. Essential for the inhibitory function of regulatory T-cells (Treg). Mediates FOXP3-mediated gene silencing in regulatory T-cells (Treg) via recruitment of corepressor CTBP1. The sequence is that of Zinc finger protein Eos (Ikzf4) from Mus musculus (Mouse).